Reading from the N-terminus, the 629-residue chain is Endoglucanase 15 (629 aa).

An N-terminal signal peptide occupies residues 1–30; it reads MAKNGGAHGAATLFGLLALASMVKLGFVAG. The active-site Nucleophile is D87. Active-site residues include H421, D473, and E482. Residues N520, N540, and N561 are each glycosylated (N-linked (GlcNAc...) asparagine).

This sequence belongs to the glycosyl hydrolase 9 (cellulase E) family.

The protein localises to the secreted. The enzyme catalyses Endohydrolysis of (1-&gt;4)-beta-D-glucosidic linkages in cellulose, lichenin and cereal beta-D-glucans.. This is Endoglucanase 15 from Oryza sativa subsp. japonica (Rice).